A 335-amino-acid chain; its full sequence is Mesoderm-specific transcript homolog protein (335 aa).

2 consecutive transmembrane segments (helical) span residues 13–33 and 63–83; these read WWVQVGLLAVPLLAAYLHIPP and VGVVGSPEIVVLLHGFPTSSY. The AB hydrolase-1 domain occupies 71–310; sequence IVVLLHGFPT…PRSTVSILDD (240 aa). Residues 98 to 103 carry the RVIALD motif; the sequence is RVIALD. An N-linked (GlcNAc...) asparagine glycan is attached at N163. The chain crosses the membrane as a helical span at residues 266 to 286; that stretch reads VGALASVTIPIHFIYGPLDPV.

This sequence belongs to the AB hydrolase superfamily. As to expression, highly expressed in hydatidiform moles, but barely expressed in dermoid cysts. Biallelic expression is detected in blood lymphocytes. Seems to imprinted in an isoform-specific manner rather than in a tissue-specific manner in lymphocytes. Isoform 1 is expressed only from the paternal allele. Isoform 2 is expressed from both the paternal allele and the maternal allele.

The protein resides in the endoplasmic reticulum membrane. This is Mesoderm-specific transcript homolog protein (MEST) from Homo sapiens (Human).